A 268-amino-acid polypeptide reads, in one-letter code: Syntaxin-22 (268 aa).

The interval 1-23 is disordered; that stretch reads MSFQDLESGRGRSTRKFNGGRQD. At Ser2 the chain carries N-acetylserine. Residues 2–246 lie on the Cytoplasmic side of the membrane; it reads SFQDLESGRG…AAKTQKSNSS (245 aa). In terms of domain architecture, t-SNARE coiled-coil homology spans 175–237; the sequence is EAVIEEREQG…SQGKSQLVQA (63 aa). A helical; Anchor for type IV membrane protein transmembrane segment spans residues 247–267; sequence LTCLLLVIFGIVLLIVIIVLA. Position 268 (Ala268) is a topological domain, vesicular.

It belongs to the syntaxin family. In terms of assembly, interacts with VTI11 and SYP51 to form a t-SNARE complex, but not with VPS45. Expressed in roots, leaves, stems, flower and green siliques.

It is found in the prevacuolar compartment membrane. The protein resides in the vacuole membrane. Functionally, may provide the t-SNARE function in the vacuolar assembly. Promotes the formation of vacuolar membrane 'bulbs'. Required for inflorescence stem gravitropism. The chain is Syntaxin-22 (SYP22) from Arabidopsis thaliana (Mouse-ear cress).